A 242-amino-acid polypeptide reads, in one-letter code: UDP-2,3-diacylglucosamine hydrolase (242 aa).

The Mn(2+) site is built by aspartate 8, histidine 10, aspartate 41, asparagine 79, and histidine 114. 79-80 contacts substrate; that stretch reads NR. Aspartate 122, lysine 164, lysine 167, and histidine 195 together coordinate substrate. Residues histidine 195 and histidine 197 each contribute to the Mn(2+) site.

Belongs to the LpxH family. The cofactor is Mn(2+).

The protein localises to the cell inner membrane. The enzyme catalyses UDP-2-N,3-O-bis[(3R)-3-hydroxytetradecanoyl]-alpha-D-glucosamine + H2O = 2-N,3-O-bis[(3R)-3-hydroxytetradecanoyl]-alpha-D-glucosaminyl 1-phosphate + UMP + 2 H(+). Its pathway is glycolipid biosynthesis; lipid IV(A) biosynthesis; lipid IV(A) from (3R)-3-hydroxytetradecanoyl-[acyl-carrier-protein] and UDP-N-acetyl-alpha-D-glucosamine: step 4/6. Functionally, hydrolyzes the pyrophosphate bond of UDP-2,3-diacylglucosamine to yield 2,3-diacylglucosamine 1-phosphate (lipid X) and UMP by catalyzing the attack of water at the alpha-P atom. Involved in the biosynthesis of lipid A, a phosphorylated glycolipid that anchors the lipopolysaccharide to the outer membrane of the cell. In Vibrio cholerae serotype O1 (strain ATCC 39315 / El Tor Inaba N16961), this protein is UDP-2,3-diacylglucosamine hydrolase.